The primary structure comprises 557 residues: 6-methylpretetramide 4-monooxygenase (557 aa).

FAD contacts are provided by residues glutamine 9 to arginine 38 and methionine 278 to aspartate 288. The segment at leucine 530–glutamate 557 is disordered.

Belongs to the PheA/TfdB FAD monooxygenase family. Requires FAD as cofactor.

The enzyme catalyses 6-methylpretetramide + NADPH + O2 + 2 H(+) = 4-hydroxy-6-methylpretetramide + NADP(+) + H2O. It carries out the reaction 4-hydroxy-6-methylpretetramide + NADPH + O2 = 4-dedimethylamino-4-oxo-anhydrotetracycline + NADP(+) + H2O. The protein operates within antibiotic biosynthesis; oxytetracycline biosynthesis. Its function is as follows. Involved in the biosynthesis of the tetracycline antibiotic, oxytetracycline. Catalyzes the double hydroxylation of 6-methylpretetramide to yield 4-keto-anhydrotetracycline, via the insertion of oxygen atoms at the C-12a and C-4 positions of 6-pretetramid. In Streptomyces rimosus, this protein is 6-methylpretetramide 4-monooxygenase.